The following is an 81-amino-acid chain: Sulfur carrier protein TusA (81 aa).

Catalysis depends on Cys-19, which acts as the Cysteine persulfide intermediate.

It belongs to the sulfur carrier protein TusA family.

It is found in the cytoplasm. In terms of biological role, sulfur carrier protein which probably makes part of a sulfur-relay system. The sequence is that of Sulfur carrier protein TusA from Shewanella baltica (strain OS185).